The primary structure comprises 105 residues: Fe-S protein maturation auxiliary factor PG_1777 (105 aa).

Belongs to the Fe-S cluster assembly domain superfamily. MIP18-like family. In terms of assembly, putative homodimer; may be disulfide-linked.

Functionally, iron binding protein that protects DNA from Fenton chemistry-mediated damage caused by hydrogen peroxide induced oxidative stress. May be involved in iron-sulfur cluster assembly. This is Fe-S protein maturation auxiliary factor PG_1777 from Porphyromonas gingivalis (strain ATCC BAA-308 / W83).